We begin with the raw amino-acid sequence, 719 residues long: Glutamate--tRNA ligase, cytoplasmic (719 aa).

Serine 93 contacts ATP. A disordered region spans residues 176-205; that stretch reads SGKPVAAPKSKDSQQAVKGDGQDKGKPEVD. Basic and acidic residues predominate over residues 195 to 204; it reads DGQDKGKPEV. Position 217 to 219 (217 to 219) interacts with L-glutamate; that stretch reads RFA. The short motif at 220–230 is the 'HIGH' region element; sequence PEPSGYLHIGH. Residue histidine 227 coordinates ATP. Residues 393–397 and arginine 411 each bind L-glutamate; that span reads YDFAC. Residues glutamate 414 and 448-452 contribute to the ATP site; that span reads LLSKR. The short motif at 448–452 is the 'KMSKS' region element; the sequence is LLSKR.

The protein belongs to the class-I aminoacyl-tRNA synthetase family. Glutamate--tRNA ligase type 2 subfamily. Interacts with GLN2, COL4 and RPP13L4/ZAR1.

Its subcellular location is the cytoplasm. It localises to the cytosol. The catalysed reaction is tRNA(Glu) + L-glutamate + ATP = L-glutamyl-tRNA(Glu) + AMP + diphosphate. Catalyzes the attachment of glutamate to tRNA(Glu) in a two-step reaction: glutamate is first activated by ATP to form Glu-AMP and then transferred to the acceptor end of tRNA(Glu). This chain is Glutamate--tRNA ligase, cytoplasmic, found in Arabidopsis thaliana (Mouse-ear cress).